The following is a 285-amino-acid chain: Acetylglutamate kinase (285 aa).

Substrate is bound by residues 64–65 (GG), R86, and N180.

This sequence belongs to the acetylglutamate kinase family. ArgB subfamily.

It is found in the plastid. The protein localises to the chloroplast. The enzyme catalyses N-acetyl-L-glutamate + ATP = N-acetyl-L-glutamyl 5-phosphate + ADP. The protein operates within amino-acid biosynthesis; L-arginine biosynthesis; N(2)-acetyl-L-ornithine from L-glutamate: step 2/4. Functionally, catalyzes the ATP-dependent phosphorylation of N-acetyl-L-glutamate. The protein is Acetylglutamate kinase of Gracilaria tenuistipitata var. liui (Red alga).